The chain runs to 134 residues: Putative transposase InsN for insertion sequence element IS911A (134 aa).

Belongs to the transposase 8 family.

Involved in the transposition of the insertion sequence IS911. This chain is Putative transposase InsN for insertion sequence element IS911A (insN1), found in Escherichia coli (strain K12).